The primary structure comprises 263 residues: Ribonuclease HII (263 aa).

The region spanning 71–262 (QAIAGIDEVG…VKSMCCDSTN (192 aa)) is the RNase H type-2 domain. The a divalent metal cation site is built by D77, E78, and D172.

This sequence belongs to the RNase HII family. It depends on Mn(2+) as a cofactor. Requires Mg(2+) as cofactor.

The protein resides in the cytoplasm. It carries out the reaction Endonucleolytic cleavage to 5'-phosphomonoester.. Endonuclease that specifically degrades the RNA of RNA-DNA hybrids. The protein is Ribonuclease HII of Streptococcus pyogenes serotype M12 (strain MGAS2096).